The primary structure comprises 101 residues: Apolipoprotein C-II (101 aa).

Positions 1-22 are cleaved as a signal peptide; that stretch reads MGARHLLALLLVLLVLGFEVQG. A lipid binding region spans residues 66–74; it reads TMDEKIRDM. A lipoprotein lipase cofactor region spans residues 78-101; that stretch reads STAAVSTYVGIFTDQLLSLLKGED.

The protein belongs to the apolipoprotein C2 family. Post-translationally, proapolipoprotein C-II is synthesized as a sialic acid containing glycoprotein which is subsequently desialylated prior to its proteolytic processing. In terms of processing, proapolipoprotein C-II, the major form found in plasma undergoes proteolytic cleavage of its N-terminal hexapeptide to generate apolipoprotein C-II, which occurs as the minor form in plasma.

The protein localises to the secreted. Component of chylomicrons, very low-density lipoproteins (VLDL), low-density lipoproteins (LDL), and high-density lipoproteins (HDL) in plasma. Plays an important role in lipoprotein metabolism as an activator of lipoprotein lipase. Both proapolipoprotein C-II and apolipoprotein C-II can activate lipoprotein lipase. The sequence is that of Apolipoprotein C-II (APOC2) from Tapirus terrestris (Lowland tapir).